A 353-amino-acid polypeptide reads, in one-letter code: sn-glycerol-3-phosphate import ATP-binding protein UgpC 3 (353 aa).

The ABC transporter domain occupies 4–235; sequence IALKDVRKVY…PATTFVATFI (232 aa). Residue 37 to 44 participates in ATP binding; it reads GPSGCGKS.

This sequence belongs to the ABC transporter superfamily. sn-glycerol-3-phosphate importer (TC 3.A.1.1.3) family. As to quaternary structure, the complex is composed of two ATP-binding proteins (UgpC), two transmembrane proteins (UgpA and UgpE) and a solute-binding protein (UgpB).

The protein resides in the cell inner membrane. The enzyme catalyses sn-glycerol 3-phosphate(out) + ATP + H2O = sn-glycerol 3-phosphate(in) + ADP + phosphate + H(+). In terms of biological role, part of the ABC transporter complex UgpBAEC involved in sn-glycerol-3-phosphate (G3P) import. Responsible for energy coupling to the transport system. This Agrobacterium fabrum (strain C58 / ATCC 33970) (Agrobacterium tumefaciens (strain C58)) protein is sn-glycerol-3-phosphate import ATP-binding protein UgpC 3.